Consider the following 260-residue polypeptide: 1-(5-phosphoribosyl)-5-[(5-phosphoribosylamino)methylideneamino] imidazole-4-carboxamide isomerase (260 aa).

The active-site Proton acceptor is Asp-8. Asp-130 acts as the Proton donor in catalysis.

This sequence belongs to the HisA/HisF family.

The protein resides in the cytoplasm. The enzyme catalyses 1-(5-phospho-beta-D-ribosyl)-5-[(5-phospho-beta-D-ribosylamino)methylideneamino]imidazole-4-carboxamide = 5-[(5-phospho-1-deoxy-D-ribulos-1-ylimino)methylamino]-1-(5-phospho-beta-D-ribosyl)imidazole-4-carboxamide. It participates in amino-acid biosynthesis; L-histidine biosynthesis; L-histidine from 5-phospho-alpha-D-ribose 1-diphosphate: step 4/9. The chain is 1-(5-phosphoribosyl)-5-[(5-phosphoribosylamino)methylideneamino] imidazole-4-carboxamide isomerase from Chlorobium phaeobacteroides (strain BS1).